The following is an 846-amino-acid chain: DNA mismatch repair protein MutS (846 aa).

Gly610 to Ser617 provides a ligand contact to ATP.

The protein belongs to the DNA mismatch repair MutS family.

Its function is as follows. This protein is involved in the repair of mismatches in DNA. It is possible that it carries out the mismatch recognition step. This protein has a weak ATPase activity. The sequence is that of DNA mismatch repair protein MutS from Legionella pneumophila (strain Lens).